The sequence spans 162 residues: Caveolin-2 (162 aa).

At 1-86 the chain is on the cytoplasmic side; the sequence is MGLETEKADV…FEVSKYVIYK (86 aa). The residue at position 19 (Tyr-19) is a Phosphotyrosine; by SRC. Residues Ser-20 and Ser-23 each carry the phosphoserine modification. A Phosphotyrosine; by SRC modification is found at Tyr-27. The helical intramembrane region spans 87–107; that stretch reads FLTLFLAIPLAFAAGILFATL. Residues 108 to 162 are Cytoplasmic-facing; it reads SCLHIWIVMPFVKTCLMVLPSVQTIWKSVTDVVIAPLCASVGRSFSSVSMQLSRD.

Belongs to the caveolin family. In terms of assembly, monomer or homodimer. Interacts with CAV1; the interaction forms a stable heterooligomeric complex that is required for targeting to lipid rafts and for caveolae formation. Tyrosine phosphorylated forms do not form heterooligomers with the Tyr-19-phosphorylated form existing as a monomer or dimer, and the Tyr-27-form as a monomer only. Interacts (tyrosine phosphorylated form) with the SH2 domain-containing proteins, RASA1, NCK1 and SRC. Interacts (tyrosine phosphorylated form) with INSR, the interaction (Tyr-27-phosphorylated form) is increased on insulin stimulation. Interacts (Tyr-19 phosphorylated form) with MAPK1 (phosphorylated form); the interaction, promoted by insulin, leads to nuclear location and MAPK1 activation. Interacts with STAT3; the interaction is increased on insulin-induced tyrosine phosphorylation leading to STAT activation. Post-translationally, phosphorylated on serine and tyrosine residues. CAV1 promotes phosphorylation on Ser-23 which then targets the complex to the plasma membrane, lipid rafts and caveolae. Phosphorylation on both Tyr-19 and Tyr-27 is required for insulin-induced 'Ser-727' phosphorylation of STAT3 and its activation. Phosphorylation on Tyr-19 is required for insulin-induced phosphorylation of MAPK1 and DNA binding of STAT3. Tyrosine phosphorylation is induced by both EGF and insulin.

Its subcellular location is the nucleus. It is found in the cytoplasm. The protein localises to the golgi apparatus membrane. It localises to the cell membrane. The protein resides in the membrane. Its subcellular location is the caveola. May act as a scaffolding protein within caveolar membranes. Interacts directly with G-protein alpha subunits and can functionally regulate their activity. Acts as an accessory protein in conjunction with CAV1 in targeting to lipid rafts and driving caveolae formation. Positive regulator of cellular mitogenesis of the MAPK signaling pathway. Required for the insulin-stimulated nuclear translocation and activation of MAPK1 and STAT3, and the subsequent regulation of cell cycle progression. This is Caveolin-2 (CAV2) from Rhinolophus ferrumequinum (Greater horseshoe bat).